Consider the following 114-residue polypeptide: Non-specific lipid-transfer protein 1 (114 aa).

Positions 1 to 25 are cleaved as a signal peptide; sequence MIKGLAITVVAVLAVVQLLARPSDA. Disulfide bonds link Cys29/Cys76, Cys39/Cys53, Cys54/Cys99, and Cys74/Cys113.

Belongs to the plant LTP family. In terms of tissue distribution, expressed in seeds and, at very low levels, in pulp of fruit (at protein level).

Its function is as follows. Plant non-specific lipid-transfer proteins transfer phospholipids as well as galactolipids across membranes. May play a role in wax or cutin deposition in the cell walls of expanding epidermal cells and certain secretory tissues. This Actinidia chinensis var. chinensis (Chinese soft-hair kiwi) protein is Non-specific lipid-transfer protein 1.